A 324-amino-acid chain; its full sequence is Geranylgeranyl diphosphate synthase (324 aa).

Isopentenyl diphosphate contacts are provided by Lys-46, Arg-49, and His-78. 2 residues coordinate Mg(2+): Asp-85 and Asp-89. Arg-94 is a binding site for an all-trans-polyprenyl diphosphate. Arg-95 provides a ligand contact to isopentenyl diphosphate. Residues Lys-176, Thr-177, Gln-214, Lys-231, and Lys-241 each contribute to the an all-trans-polyprenyl diphosphate site.

This sequence belongs to the FPP/GGPP synthase family. It depends on Mg(2+) as a cofactor.

It catalyses the reaction isopentenyl diphosphate + (2E,6E)-farnesyl diphosphate = (2E,6E,10E)-geranylgeranyl diphosphate + diphosphate. Its pathway is isoprenoid biosynthesis; geranylgeranyl diphosphate biosynthesis; geranylgeranyl diphosphate from farnesyl diphosphate and isopentenyl diphosphate: step 1/1. Functionally, catalyzes the sequential condensation of isopentenyl pyrophosphate with the allylic pyrophosphates to yield geranylgeranyl diphosphate (GGPP) which is a precursor of the ether-linked lipids. The polypeptide is Geranylgeranyl diphosphate synthase (Methanosarcina mazei (strain ATCC BAA-159 / DSM 3647 / Goe1 / Go1 / JCM 11833 / OCM 88) (Methanosarcina frisia)).